Reading from the N-terminus, the 265-residue chain is Ribosomal RNA large subunit methyltransferase E (265 aa).

Positions 83, 85, 106, 122, and 146 each coordinate S-adenosyl-L-methionine. Catalysis depends on Lys186, which acts as the Proton acceptor. The segment at 230 to 265 is disordered; the sequence is KGREAGPPSGGSERPVDVSKDLSARSDSEGPGDAEG. The span at 243 to 257 shows a compositional bias: basic and acidic residues; that stretch reads RPVDVSKDLSARSDS.

The protein belongs to the class I-like SAM-binding methyltransferase superfamily. RNA methyltransferase RlmE family.

The protein resides in the cytoplasm. It catalyses the reaction uridine(2552) in 23S rRNA + S-adenosyl-L-methionine = 2'-O-methyluridine(2552) in 23S rRNA + S-adenosyl-L-homocysteine + H(+). In terms of biological role, specifically methylates the uridine in position 2552 of 23S rRNA at the 2'-O position of the ribose in the fully assembled 50S ribosomal subunit. This Mesorhizobium japonicum (strain LMG 29417 / CECT 9101 / MAFF 303099) (Mesorhizobium loti (strain MAFF 303099)) protein is Ribosomal RNA large subunit methyltransferase E.